We begin with the raw amino-acid sequence, 504 residues long: MVENNIILEMNGISKNFPGVKALDGVDLKVKKGTVHALMGENGAGKSTLMKCLFGIYRSDDGEIVLGGKKVQFKNAKDALENGISMIHQELHPVPHRSVMENVWLGRFPVKKVFGLGIVDHKKMYEDTKDLLGKLKMNIDPNTLVSKLSVSQVQGLEIAKAVSYNSKIIVMDEPTSSLTENEVTHLFNIISDLKNQGVAIIYISHKMEEILKIADEVTIMRDGKYIGTWEAEGLTTDLIISKMVGRDLTNRFPPKENTPGEVIMKVENLTSANNKSFKDISFELRKGEILGIGGLVGAQRTELVESIFGLRKIETGKIYINGQEVKIKSPINSKKYGIALLTEERRSTGIFPVLTVGDNTIIAGLDKYIDLKFVVNQKRGMKDIKNSIEKLNIRTPSHATQIKNLSGGNQQKVIFSRWLLTEPDVLIMDEPTRGIDVGAKYEIYSIISDLSKMGKSIIMISSEMPELIGMSDRIMIMCDGRLSGIIEGEEATQEEIMKYATRFI.

2 ABC transporter domains span residues 8 to 247 (LEMN…VGRD) and 258 to 504 (TPGE…TRFI). 40-47 (GENGAGKS) contacts ATP.

It belongs to the ABC transporter superfamily. Galactose/methyl galactoside importer (TC 3.A.1.2.3) family. The complex is composed of one ATP-binding protein (MglA), two transmembrane proteins (MglC) and a solute-binding protein (MglB).

It localises to the cell membrane. It catalyses the reaction D-galactose(out) + ATP + H2O = D-galactose(in) + ADP + phosphate + H(+). The catalysed reaction is methyl beta-D-galactoside(out) + ATP + H2O = methyl beta-D-galactoside(in) + ADP + phosphate + H(+). Its function is as follows. Part of the ABC transporter complex MglABC involved in galactose/methyl galactoside import. Responsible for energy coupling to the transport system. The protein is Galactose/methyl galactoside import ATP-binding protein MglA of Clostridium tetani (strain Massachusetts / E88).